A 225-amino-acid polypeptide reads, in one-letter code: Uridylate kinase (225 aa).

9–10 (GS) is a binding site for ATP. A UMP-binding site is contributed by Gly-46. Residues Gly-47 and Arg-51 each coordinate ATP. UMP-binding positions include Asp-67 and 115 to 121 (THPAHTT). 4 residues coordinate ATP: Thr-141, Asn-142, Tyr-147, and Asp-150.

This sequence belongs to the UMP kinase family. Homohexamer.

It localises to the cytoplasm. It catalyses the reaction UMP + ATP = UDP + ADP. The protein operates within pyrimidine metabolism; CTP biosynthesis via de novo pathway; UDP from UMP (UMPK route): step 1/1. Inhibited by UTP. Its function is as follows. Catalyzes the reversible phosphorylation of UMP to UDP. This Methanococcus maripaludis (strain C6 / ATCC BAA-1332) protein is Uridylate kinase.